The sequence spans 412 residues: Na(+)-translocating NADH-quinone reductase subunit B (412 aa).

Transmembrane regions (helical) follow at residues 57–77, 127–147, and 163–183; these read MILVWFAVFPAMFWGMYNVGL, VFFLPIYITVFIVGGFWEVLF, and SILFALIVPPTLPLWQAALGI. Thr-236 carries the post-translational modification FMN phosphoryl threonine. Helical transmembrane passes span 270-290, 297-317, 322-342, 358-378, and 381-401; these read GSIGEVSTLMILIGGAIILFG, IVAGVMIGMIATATLFNVIGS, MFSMPWYWHLVLGGFAFGMMF, WSYGVLIGVMCVLIRVVNPAY, and GMMLAILFANLFAPLFDYLVV.

This sequence belongs to the NqrB/RnfD family. Composed of six subunits; NqrA, NqrB, NqrC, NqrD, NqrE and NqrF. FMN is required as a cofactor.

It localises to the cell inner membrane. It carries out the reaction a ubiquinone + n Na(+)(in) + NADH + H(+) = a ubiquinol + n Na(+)(out) + NAD(+). NQR complex catalyzes the reduction of ubiquinone-1 to ubiquinol by two successive reactions, coupled with the transport of Na(+) ions from the cytoplasm to the periplasm. NqrA to NqrE are probably involved in the second step, the conversion of ubisemiquinone to ubiquinol. This Klebsiella pneumoniae (strain 342) protein is Na(+)-translocating NADH-quinone reductase subunit B.